A 40-amino-acid polypeptide reads, in one-letter code: Photosystem II reaction center protein X (40 aa).

Over 1 to 11 (TITPSLKGFFI) the chain is Lumenal. The helical transmembrane segment at 12–28 (GLLSGAVVLGLTFAVLI) threads the bilayer. Topologically, residues 29-40 (AISQIDKVQRSL) are cytoplasmic.

It belongs to the PsbX family. Type 1 subfamily. As to quaternary structure, PSII is composed of 1 copy each of membrane proteins PsbA, PsbB, PsbC, PsbD, PsbE, PsbF, PsbH, PsbI, PsbJ, PsbK, PsbL, PsbM, PsbT, PsbX, PsbY, PsbZ, Psb30/Ycf12, peripheral proteins PsbO, CyanoQ (PsbQ), PsbU, PsbV and a large number of cofactors. It forms dimeric complexes. PSII binds multiple chlorophylls, carotenoids and specific lipids. is required as a cofactor.

Its subcellular location is the cellular thylakoid membrane. Involved in the binding and/or turnover of quinones at the Q(B) site of photosystem II (PSII). PSII is a light-driven water plastoquinone oxidoreductase, using light energy to abstract electrons from H(2)O, generating a proton gradient subsequently used for ATP formation. This Thermostichus vulcanus (Synechococcus vulcanus) protein is Photosystem II reaction center protein X.